A 226-amino-acid polypeptide reads, in one-letter code: Ribosomal RNA large subunit methyltransferase E (226 aa).

Residues 1 to 25 form a disordered region; that stretch reads MVKPPAGGNEGGRGKPARLKTAYGR. S-adenosyl-L-methionine contacts are provided by glycine 82, tryptophan 84, aspartate 100, aspartate 116, and aspartate 140. The active-site Proton acceptor is the lysine 180.

This sequence belongs to the class I-like SAM-binding methyltransferase superfamily. RNA methyltransferase RlmE family.

It localises to the cytoplasm. It carries out the reaction uridine(2552) in 23S rRNA + S-adenosyl-L-methionine = 2'-O-methyluridine(2552) in 23S rRNA + S-adenosyl-L-homocysteine + H(+). Specifically methylates the uridine in position 2552 of 23S rRNA at the 2'-O position of the ribose in the fully assembled 50S ribosomal subunit. This Caulobacter vibrioides (strain ATCC 19089 / CIP 103742 / CB 15) (Caulobacter crescentus) protein is Ribosomal RNA large subunit methyltransferase E.